Reading from the N-terminus, the 205-residue chain is Homeobox protein goosecoid-2 (205 aa).

Disordered regions lie at residues 33-58 (SLPA…EPGA) and 185-205 (KRAS…KGSC). Residues 126–185 (TRRHRTIFSEEQLQALEALFVQNQYPDVSTRERLAGRIRLREERVEVWFKNRRAKWRHQK) constitute a DNA-binding region (homeobox).

Belongs to the paired homeobox family. Bicoid subfamily. Detected in adult testis and pituitary, and in 9-10 week fetal tissue (thorax). Probably expressed in other tissues at low levels.

It localises to the nucleus. Functionally, may have a role in development. May regulate its own transcription. May bind the bicoid consensus sequence TAATCC. The polypeptide is Homeobox protein goosecoid-2 (GSC2) (Homo sapiens (Human)).